Here is a 749-residue protein sequence, read N- to C-terminus: Photosystem I P700 chlorophyll a apoprotein A2 (749 aa).

Transmembrane regions (helical) follow at residues 46–69 (LFST…FHIA), 135–158 (LYQG…LHLQ), 175–199 (MNHH…HVAI), 273–291 (ISHH…GHMY), 343–366 (LHFQ…HHMG), 382–408 (AALY…IFFV), 430–452 (ALIS…LYLH), and 532–550 (FLVH…LILI). Positions 574 and 583 each coordinate [4Fe-4S] cluster. A run of 2 helical transmembrane segments spans residues 590–611 (STYM…YWHW) and 658–680 (LSPW…MFLI). 3 residues coordinate divinyl chlorophyll a: His669, Met677, and Tyr685. Trp686 lines the phylloquinone pocket. Residues 722 to 742 (LVGVTHFAVGNIFTFGAFVIA) form a helical membrane-spanning segment.

It belongs to the PsaA/PsaB family. In terms of assembly, the PsaA/B heterodimer binds the P700 chlorophyll special pair and subsequent electron acceptors. PSI consists of a core antenna complex that captures photons, and an electron transfer chain that converts photonic excitation into a charge separation. The cyanobacterial PSI reaction center is composed of one copy each of PsaA,B,C,D,E,F,I,J,K,L,M and X, and forms trimeric complexes. PSI electron transfer chain: 5 divinyl chlorophyll a, 1 divinyl chlorophyll a', 2 phylloquinones and 3 4Fe-4S clusters. PSI core antenna: 90 divinyl chlorophyll a, 22 carotenoids, 3 phospholipids and 1 galactolipid. P700 is a divinyl chlorophyll a/divinyl chlorophyll a' dimer, A0 is one or more divinyl chlorophyll a, A1 is one or both phylloquinones and FX is a shared 4Fe-4S iron-sulfur center. serves as cofactor.

The protein resides in the cellular thylakoid membrane. It catalyses the reaction reduced [plastocyanin] + hnu + oxidized [2Fe-2S]-[ferredoxin] = oxidized [plastocyanin] + reduced [2Fe-2S]-[ferredoxin]. Functionally, psaA and PsaB bind P700, the primary electron donor of photosystem I (PSI), as well as the electron acceptors A0, A1 and FX. PSI is a plastocyanin/cytochrome c6-ferredoxin oxidoreductase, converting photonic excitation into a charge separation, which transfers an electron from the donor P700 chlorophyll pair to the spectroscopically characterized acceptors A0, A1, FX, FA and FB in turn. Oxidized P700 is reduced on the lumenal side of the thylakoid membrane by plastocyanin or cytochrome c6. This chain is Photosystem I P700 chlorophyll a apoprotein A2, found in Prochlorococcus marinus (strain MIT 9313).